The chain runs to 230 residues: Orotidine 5'-phosphate decarboxylase (230 aa).

Substrate is bound by residues D11, K34, 61–70 (DLKLHDIPNT), T117, R179, Q188, G208, and R209. Residue K63 is the Proton donor of the active site.

It belongs to the OMP decarboxylase family. Type 1 subfamily. Homodimer.

It carries out the reaction orotidine 5'-phosphate + H(+) = UMP + CO2. It functions in the pathway pyrimidine metabolism; UMP biosynthesis via de novo pathway; UMP from orotate: step 2/2. In terms of biological role, catalyzes the decarboxylation of orotidine 5'-monophosphate (OMP) to uridine 5'-monophosphate (UMP). In Streptococcus equi subsp. zooepidemicus (strain MGCS10565), this protein is Orotidine 5'-phosphate decarboxylase.